A 339-amino-acid polypeptide reads, in one-letter code: Glycerol-3-phosphate dehydrogenase [NAD(P)+] (339 aa).

NADPH contacts are provided by S15, Y16, H36, and K110. Residues K110, G139, and T141 each contribute to the sn-glycerol 3-phosphate site. A143 provides a ligand contact to NADPH. Positions 195, 248, 258, 259, and 260 each coordinate sn-glycerol 3-phosphate. K195 (proton acceptor) is an active-site residue. Position 259 (R259) interacts with NADPH. NADPH is bound by residues V283 and E285.

This sequence belongs to the NAD-dependent glycerol-3-phosphate dehydrogenase family.

The protein localises to the cytoplasm. It carries out the reaction sn-glycerol 3-phosphate + NAD(+) = dihydroxyacetone phosphate + NADH + H(+). The catalysed reaction is sn-glycerol 3-phosphate + NADP(+) = dihydroxyacetone phosphate + NADPH + H(+). The protein operates within membrane lipid metabolism; glycerophospholipid metabolism. In terms of biological role, catalyzes the reduction of the glycolytic intermediate dihydroxyacetone phosphate (DHAP) to sn-glycerol 3-phosphate (G3P), the key precursor for phospholipid synthesis. The polypeptide is Glycerol-3-phosphate dehydrogenase [NAD(P)+] (Cronobacter sakazakii (strain ATCC BAA-894) (Enterobacter sakazakii)).